Consider the following 220-residue polypeptide: Putative 3-methyladenine DNA glycosylase (220 aa).

It belongs to the DNA glycosylase MPG family.

This chain is Putative 3-methyladenine DNA glycosylase, found in Rickettsia bellii (strain RML369-C).